We begin with the raw amino-acid sequence, 254 residues long: Protein PET122, mitochondrial (254 aa).

A mitochondrion-targeting transit peptide spans 1-8 (MLTITKRL). Residues 185–254 (QAAALALFGR…IKRRGFEINT (70 aa)) form an essential for PET122 function region.

Its subcellular location is the mitochondrion inner membrane. Its function is as follows. Required for expression of the mitochondrial gene for cytochrome c oxidase subunit 3 (COX3). PET122 seems to work by directly interacting with the small ribosomal subunit to promote translation initiation on the COX3 mRNA. This Saccharomyces cerevisiae (strain ATCC 204508 / S288c) (Baker's yeast) protein is Protein PET122, mitochondrial (PET122).